The primary structure comprises 178 residues: Large ribosomal subunit protein uL6 (178 aa).

The protein belongs to the universal ribosomal protein uL6 family. In terms of assembly, part of the 50S ribosomal subunit.

Functionally, this protein binds to the 23S rRNA, and is important in its secondary structure. It is located near the subunit interface in the base of the L7/L12 stalk, and near the tRNA binding site of the peptidyltransferase center. The polypeptide is Large ribosomal subunit protein uL6 (Streptococcus sanguinis (strain SK36)).